We begin with the raw amino-acid sequence, 700 residues long: DNA topoisomerase 1 (700 aa).

The Toprim domain occupies 3 to 114 (KNLIIVESPA…TLPRIVFHEI (112 aa)). Mg(2+) is bound by residues E9 and D83. Residues 130–553 (NMHSVNAQQT…EFYYPFMRKI (424 aa)) form the Topo IA-type catalytic domain. The tract at residues 164 to 169 (SAGRVQ) is interaction with DNA. The active-site O-(5'-phospho-DNA)-tyrosine intermediate is Y298. 3 C4-type zinc fingers span residues 573 to 599 (CPDC…FPKC), 629 to 656 (CPSC…YPKC), and 669 to 692 (CEEC…CLKC).

This sequence belongs to the type IA topoisomerase family. Monomer. Mg(2+) serves as cofactor.

It catalyses the reaction ATP-independent breakage of single-stranded DNA, followed by passage and rejoining.. In terms of biological role, releases the supercoiling and torsional tension of DNA, which is introduced during the DNA replication and transcription, by transiently cleaving and rejoining one strand of the DNA duplex. Introduces a single-strand break via transesterification at a target site in duplex DNA. The scissile phosphodiester is attacked by the catalytic tyrosine of the enzyme, resulting in the formation of a DNA-(5'-phosphotyrosyl)-enzyme intermediate and the expulsion of a 3'-OH DNA strand. The free DNA strand then undergoes passage around the unbroken strand, thus removing DNA supercoils. Finally, in the religation step, the DNA 3'-OH attacks the covalent intermediate to expel the active-site tyrosine and restore the DNA phosphodiester backbone. The chain is DNA topoisomerase 1 from Campylobacter jejuni subsp. jejuni serotype O:2 (strain ATCC 700819 / NCTC 11168).